Consider the following 135-residue polypeptide: ATP synthase epsilon chain (135 aa).

It belongs to the ATPase epsilon chain family. In terms of assembly, F-type ATPases have 2 components, CF(1) - the catalytic core - and CF(0) - the membrane proton channel. CF(1) has five subunits: alpha(3), beta(3), gamma(1), delta(1), epsilon(1). CF(0) has three main subunits: a, b and c.

Its subcellular location is the cell inner membrane. Its function is as follows. Produces ATP from ADP in the presence of a proton gradient across the membrane. This Brucella anthropi (strain ATCC 49188 / DSM 6882 / CCUG 24695 / JCM 21032 / LMG 3331 / NBRC 15819 / NCTC 12168 / Alc 37) (Ochrobactrum anthropi) protein is ATP synthase epsilon chain.